The sequence spans 603 residues: Glutamyl-tRNA(Gln) amidotransferase subunit E (603 aa).

It belongs to the GatB/GatE family. GatE subfamily. In terms of assembly, heterodimer of GatD and GatE.

The catalysed reaction is L-glutamyl-tRNA(Gln) + L-glutamine + ATP + H2O = L-glutaminyl-tRNA(Gln) + L-glutamate + ADP + phosphate + H(+). Its function is as follows. Allows the formation of correctly charged Gln-tRNA(Gln) through the transamidation of misacylated Glu-tRNA(Gln) in organisms which lack glutaminyl-tRNA synthetase. The reaction takes place in the presence of glutamine and ATP through an activated gamma-phospho-Glu-tRNA(Gln). The GatDE system is specific for glutamate and does not act on aspartate. The protein is Glutamyl-tRNA(Gln) amidotransferase subunit E of Thermoplasma acidophilum (strain ATCC 25905 / DSM 1728 / JCM 9062 / NBRC 15155 / AMRC-C165).